The chain runs to 247 residues: 3-deoxy-manno-octulosonate cytidylyltransferase (247 aa).

It belongs to the KdsB family.

It localises to the cytoplasm. It catalyses the reaction 3-deoxy-alpha-D-manno-oct-2-ulosonate + CTP = CMP-3-deoxy-beta-D-manno-octulosonate + diphosphate. It participates in nucleotide-sugar biosynthesis; CMP-3-deoxy-D-manno-octulosonate biosynthesis; CMP-3-deoxy-D-manno-octulosonate from 3-deoxy-D-manno-octulosonate and CTP: step 1/1. The protein operates within bacterial outer membrane biogenesis; lipopolysaccharide biosynthesis. Functionally, activates KDO (a required 8-carbon sugar) for incorporation into bacterial lipopolysaccharide in Gram-negative bacteria. This Methylobacterium nodulans (strain LMG 21967 / CNCM I-2342 / ORS 2060) protein is 3-deoxy-manno-octulosonate cytidylyltransferase.